A 238-amino-acid chain; its full sequence is Probable transcriptional regulatory protein YeeN (238 aa).

This sequence belongs to the TACO1 family. YeeN subfamily.

It is found in the cytoplasm. This is Probable transcriptional regulatory protein YeeN from Escherichia coli O157:H7.